The primary structure comprises 343 residues: MIGIVSYGSYVPKFRIRVEEIARVWGEDAKKIKDGLGVHEKSVPGMDEDAATIAVEAAREAIRRAGINPEEIGAVFVGSESHPYAVKPTATIVGEALGVGNDYFAADLEFACKAGTAGMQICYSMVKAGMIKYGLAIGADTSQARPGDALEYAAAAGGAAFIIGENPIAEVEATYSFTSDTPDFWRRDLQPYPSHGGRFTGLPAYFRHVISAAKGLMEKYGYKVEDFDYAVFHMPNAKFPVRAAKMLGFSMEHISQGLVVKAIGNTYSGSSLLGLAATLDVAEPDERILLVSFGSGAGSDAFAIRVTDAIENYPREPKVWEKIERKAYVDYAIYLKHRRKIKA.

(3S)-3-hydroxy-3-methylglutaryl-CoA-binding residues include Asp28 and Ala29. Glu80 functions as the Proton donor/acceptor in the catalytic mechanism. Cys112 serves as a coordination point for (3S)-3-hydroxy-3-methylglutaryl-CoA. Cys112 functions as the Acyl-thioester intermediate in the catalytic mechanism. Residue Arg198 coordinates CoA. The (3S)-3-hydroxy-3-methylglutaryl-CoA site is built by Thr200 and His233. His233 functions as the Proton donor/acceptor in the catalytic mechanism. Residue Lys238 coordinates CoA. Arg242, Asn265, and Ser295 together coordinate (3S)-3-hydroxy-3-methylglutaryl-CoA.

Belongs to the thiolase-like superfamily. Archaeal HMG-CoA synthase family. In terms of assembly, interacts with acetoacetyl-CoA thiolase that catalyzes the precedent step in the pathway and with a DUF35 protein. The acetoacetyl-CoA thiolase/HMG-CoA synthase complex channels the intermediate via a fused CoA-binding site, which allows for efficient coupling of the endergonic thiolase reaction with the exergonic HMGCS reaction.

The enzyme catalyses acetoacetyl-CoA + acetyl-CoA + H2O = (3S)-3-hydroxy-3-methylglutaryl-CoA + CoA + H(+). The protein operates within metabolic intermediate biosynthesis; (R)-mevalonate biosynthesis; (R)-mevalonate from acetyl-CoA: step 2/3. Its function is as follows. Catalyzes the condensation of acetyl-CoA with acetoacetyl-CoA to form 3-hydroxy-3-methylglutaryl-CoA (HMG-CoA). Functions in the mevalonate (MVA) pathway leading to isopentenyl diphosphate (IPP), a key precursor for the biosynthesis of isoprenoid compounds that are building blocks of archaeal membrane lipids. The protein is Hydroxymethylglutaryl-CoA synthase of Archaeoglobus fulgidus (strain ATCC 49558 / DSM 4304 / JCM 9628 / NBRC 100126 / VC-16).